A 143-amino-acid polypeptide reads, in one-letter code: Large ribosomal subunit protein uL15 (143 aa).

Basic residues-rich tracts occupy residues 1-13 (MIRK…KMRG) and 23-38 (KKHR…GNAG). Residues 1–38 (MIRKSKKITKMRGSRTCGYGEAKKHRGAGHRGGRGNAG) form a disordered region.

Belongs to the universal ribosomal protein uL15 family. Part of the 50S ribosomal subunit.

Its function is as follows. Binds to the 23S rRNA. The polypeptide is Large ribosomal subunit protein uL15 (Methanococcus maripaludis (strain C6 / ATCC BAA-1332)).